Reading from the N-terminus, the 167-residue chain is Troponin C-akin-1 protein (167 aa).

17–20 (YGAL) contacts substrate. Catalysis depends on Glu-92, which acts as the Proton acceptor.

The protein belongs to the gamma-glutamylcyclotransferase family. As to expression, in embryos, expression is seen in heart cells of the dorsal vessel and hindgut visceral mesoderm.

Its function is as follows. Putative gamma-glutamylcyclotransferase. This Drosophila melanogaster (Fruit fly) protein is Troponin C-akin-1 protein (Tina-1).